Consider the following 776-residue polypeptide: Glutathione biosynthesis bifunctional protein GshAB (776 aa).

The interval 1-354 is glutamate--cysteine ligase; it reads MIKLDMTILD…QLADENENNI (354 aa). The 255-residue stretch at 521 to 775 folds into the ATP-grasp domain; that stretch reads KLVLAENNIR…IGDKILDFLF (255 aa). 548 to 606 contributes to the ATP binding site; the sequence is SLFKDKQIVVKPKSTNYGWGISIFKNKFTTEDYQEALNIAFSYDSSVIIEEFIPGDEFR. Aspartate 728, glutamate 745, and asparagine 747 together coordinate Mg(2+). The Mn(2+) site is built by aspartate 728, glutamate 745, and asparagine 747.

This sequence in the N-terminal section; belongs to the glutamate--cysteine ligase type 1 family. Type 2 subfamily. Monomer. Requires Mg(2+) as cofactor. The cofactor is Mn(2+).

It catalyses the reaction L-cysteine + L-glutamate + ATP = gamma-L-glutamyl-L-cysteine + ADP + phosphate + H(+). The enzyme catalyses gamma-L-glutamyl-L-cysteine + glycine + ATP = glutathione + ADP + phosphate + H(+). Its pathway is sulfur metabolism; glutathione biosynthesis; glutathione from L-cysteine and L-glutamate: step 1/2. The protein operates within sulfur metabolism; glutathione biosynthesis; glutathione from L-cysteine and L-glutamate: step 2/2. Synthesizes glutathione from L-glutamate and L-cysteine via gamma-L-glutamyl-L-cysteine. The protein is Glutathione biosynthesis bifunctional protein GshAB of Listeria welshimeri serovar 6b (strain ATCC 35897 / DSM 20650 / CCUG 15529 / CIP 8149 / NCTC 11857 / SLCC 5334 / V8).